The sequence spans 52 residues: Large ribosomal subunit protein bL32c (52 aa).

It belongs to the bacterial ribosomal protein bL32 family.

It localises to the plastid. Its subcellular location is the chloroplast. This chain is Large ribosomal subunit protein bL32c, found in Aethionema grandiflorum (Persian stone-cress).